We begin with the raw amino-acid sequence, 209 residues long: Imidazole glycerol phosphate synthase subunit HisH (209 aa).

In terms of domain architecture, Glutamine amidotransferase type-1 spans 3–209 (KIAIIDYGMG…SILKNFGEMK (207 aa)). Cysteine 81 functions as the Nucleophile in the catalytic mechanism. Active-site residues include histidine 190 and glutamate 192.

In terms of assembly, heterodimer of HisH and HisF.

The protein localises to the cytoplasm. It catalyses the reaction 5-[(5-phospho-1-deoxy-D-ribulos-1-ylimino)methylamino]-1-(5-phospho-beta-D-ribosyl)imidazole-4-carboxamide + L-glutamine = D-erythro-1-(imidazol-4-yl)glycerol 3-phosphate + 5-amino-1-(5-phospho-beta-D-ribosyl)imidazole-4-carboxamide + L-glutamate + H(+). The catalysed reaction is L-glutamine + H2O = L-glutamate + NH4(+). Its pathway is amino-acid biosynthesis; L-histidine biosynthesis; L-histidine from 5-phospho-alpha-D-ribose 1-diphosphate: step 5/9. Its function is as follows. IGPS catalyzes the conversion of PRFAR and glutamine to IGP, AICAR and glutamate. The HisH subunit catalyzes the hydrolysis of glutamine to glutamate and ammonia as part of the synthesis of IGP and AICAR. The resulting ammonia molecule is channeled to the active site of HisF. The sequence is that of Imidazole glycerol phosphate synthase subunit HisH from Geobacter sulfurreducens (strain ATCC 51573 / DSM 12127 / PCA).